A 175-amino-acid polypeptide reads, in one-letter code: Alkyl hydroperoxide reductase AhpD (175 aa).

Catalysis depends on Cys130, which acts as the Proton donor. Cys130 and Cys133 are oxidised to a cystine. Catalysis depends on Cys133, which acts as the Cysteine sulfenic acid (-SOH) intermediate.

The protein belongs to the AhpD family. Homotrimer.

The enzyme catalyses N(6)-[(R)-dihydrolipoyl]-L-lysyl-[lipoyl-carrier protein] + a hydroperoxide = N(6)-[(R)-lipoyl]-L-lysyl-[lipoyl-carrier protein] + an alcohol + H2O. Functionally, antioxidant protein with alkyl hydroperoxidase activity. Required for the reduction of the AhpC active site cysteine residues and for the regeneration of the AhpC enzyme activity. This chain is Alkyl hydroperoxide reductase AhpD, found in Mycobacteroides abscessus (strain ATCC 19977 / DSM 44196 / CCUG 20993 / CIP 104536 / JCM 13569 / NCTC 13031 / TMC 1543 / L948) (Mycobacterium abscessus).